The primary structure comprises 280 residues: Hydroxyacylglutathione hydrolase, mitochondrial (280 aa).

Lysine 61 is modified (N6-acetyllysine). Positions 74, 76, 78, and 79 each coordinate Zn(2+). Lysine 88 is modified (N6-acetyllysine). Histidine 130 and aspartate 154 together coordinate Zn(2+). Substrate contacts are provided by residues 163-165 and 193-195; these read KFY and HEY. Histidine 193 contacts Zn(2+). N6-acetyllysine; alternate is present on lysine 201. Lysine 201 is modified (N6-succinyllysine; alternate). A substrate-binding site is contributed by 269–272; the sequence is RREK.

This sequence belongs to the metallo-beta-lactamase superfamily. Glyoxalase II family. Monomer. The cofactor is Zn(2+). Testis.

The protein localises to the mitochondrion matrix. The protein resides in the cytoplasm. It catalyses the reaction an S-(2-hydroxyacyl)glutathione + H2O = a 2-hydroxy carboxylate + glutathione + H(+). The catalysed reaction is (R)-S-lactoylglutathione + H2O = (R)-lactate + glutathione + H(+). The protein operates within secondary metabolite metabolism; methylglyoxal degradation; (R)-lactate from methylglyoxal: step 2/2. Thiolesterase that catalyzes the hydrolysis of S-D-lactoyl-glutathione to form glutathione and D-lactic acid. This is Hydroxyacylglutathione hydrolase, mitochondrial (HAGH) from Callithrix jacchus (White-tufted-ear marmoset).